Reading from the N-terminus, the 120-residue chain is Putative B3 domain-containing protein At3g28853 (120 aa).

The segment at residues 19–120 (INKRLTQSDV…DKSNEVFYII (102 aa)) is a DNA-binding region (TF-B3).

Its subcellular location is the nucleus. This Arabidopsis thaliana (Mouse-ear cress) protein is Putative B3 domain-containing protein At3g28853.